The sequence spans 102 residues: Acid shock protein (102 aa).

The signal sequence occupies residues 1–21 (MKKVLALVVAAAMGLSSAAFA). Residues 22–41 (AETATTPAPTATTTKAAPAK) are compositionally biased toward low complexity. Residues 22–58 (AETATTPAPTATTTKAAPAKTTHHKKQHKAAPAQKAQ) constitute a propeptide that is removed on maturation. The disordered stretch occupies residues 22 to 102 (AETATTPAPT…PAKPAAQPAA (81 aa)). A compositionally biased stretch (basic residues) spans 80–90 (AAKKHAKKHSH). Residues 91–102 (QQPAKPAAQPAA) show a composition bias toward low complexity.

It belongs to the Asr family. Proteolytic processing gives rise to the active protein.

Its subcellular location is the periplasm. Required for growth and/or survival at acidic conditions. This chain is Acid shock protein, found in Escherichia coli O17:K52:H18 (strain UMN026 / ExPEC).